We begin with the raw amino-acid sequence, 395 residues long: Phosphoglycerate kinase (395 aa).

Substrate is bound by residues 21 to 23, Arg-36, 59 to 62, Arg-113, and Arg-146; these read DLN and HLGR. ATP contacts are provided by residues Lys-197, Glu-324, and 350–353; that span reads GGDT.

Belongs to the phosphoglycerate kinase family. Monomer.

It is found in the cytoplasm. It carries out the reaction (2R)-3-phosphoglycerate + ATP = (2R)-3-phospho-glyceroyl phosphate + ADP. Its pathway is carbohydrate degradation; glycolysis; pyruvate from D-glyceraldehyde 3-phosphate: step 2/5. This chain is Phosphoglycerate kinase, found in Acinetobacter baumannii (strain ATCC 17978 / DSM 105126 / CIP 53.77 / LMG 1025 / NCDC KC755 / 5377).